Reading from the N-terminus, the 734-residue chain is MNTSLRLNHYWITCADGLETLLQEEIEQLGTKVTERKAGRLIIEGTLEHAYRICMWSRLASRVLLPIHTYELERTHDARDVAEELYEGAISFDWSLIFAPQSTFAIRLHAEREIKVNTQFATLRVKDGVVDSFMEAVGRRPSIDTKQPEITLYVLAGKTEHTYCLDLSGDSLHKRGYRRFMTDAPIKENLAAAILQKAKLQERNPEIVLDPMCGSGTFIIEALMILTDRAPGLVRRFGFNGWHGHDRELWLSLKAEAAERHEKALEQPLPKFYAYDADWEAVKATRENIIAAGFEKLLGDIQIEERTLADWPDFGAENKTAFIVTNPPYGERLGDKASNRSLYLGLSALLQKNFPNQYAAIIAAQIEQADVLAFEAPETLRLMNGKLPIYVRFGTVKLEKVTQPFLANWQAQPVEMEEAQDFANRLQKNMTALKKWATKENIYCLRLYDADLPDFNLAVDLYSDRLHVQEYAPPKKIDPEKAKKRFNLALAAIRAVTGLNRDAIFIKTRARQTGTNQYTKQSTANKRFIVQEGKAKILVNLTDYLDTGLFLDHRQMRLRIAQEARGKHFLNLYSYTSTASLHAALGGAASTTSVDLSNTYLSWSKENFVLNGLTVDHADEQHMFFASDCFEWLKEGHEQYDLIFIDPPTFSNSKKFHGTFDVQRDHVSLIKRAMNRLTSEGTLYFSNNYRGFEMDEEIEALYDVEEITSETIGPDFKRNQKIHRAWKIQHPGLN.

The 119-residue stretch at 49–167 (HAYRICMWSR…KTEHTYCLDL (119 aa)) folds into the THUMP domain.

The protein belongs to the methyltransferase superfamily. RlmKL family.

Its subcellular location is the cytoplasm. The enzyme catalyses guanosine(2445) in 23S rRNA + S-adenosyl-L-methionine = N(2)-methylguanosine(2445) in 23S rRNA + S-adenosyl-L-homocysteine + H(+). The catalysed reaction is guanosine(2069) in 23S rRNA + S-adenosyl-L-methionine = N(2)-methylguanosine(2069) in 23S rRNA + S-adenosyl-L-homocysteine + H(+). Its function is as follows. Specifically methylates the guanine in position 2445 (m2G2445) and the guanine in position 2069 (m7G2069) of 23S rRNA. The polypeptide is Ribosomal RNA large subunit methyltransferase K/L (Acinetobacter baumannii (strain SDF)).